The sequence spans 713 residues: Mitochondrial intermediate peptidase (713 aa).

Residues 1–35 (MLCVGRLGGLGARAAALPPRRAGRGILEAGIRARR) constitute a mitochondrion transit peptide. An N6-acetyllysine modification is found at Lys-126. His-495 contacts Zn(2+). Residue Glu-496 is part of the active site. Residues His-499 and His-502 each contribute to the Zn(2+) site.

Belongs to the peptidase M3 family. Monomer. The cofactor is Zn(2+).

Its subcellular location is the mitochondrion matrix. The catalysed reaction is Release of an N-terminal octapeptide as second stage of processing of some proteins imported into the mitochondrion.. With respect to regulation, activity is divalent cation-dependent. It is stimulated by manganese, magnesium or calcium ions and reversibly inhibited by zinc, cobalt and iron. Cleaves proteins, imported into the mitochondrion, to their mature size. The polypeptide is Mitochondrial intermediate peptidase (MIPEP) (Pongo abelii (Sumatran orangutan)).